We begin with the raw amino-acid sequence, 496 residues long: Transactivator/viroplasmin protein (496 aa).

Residues R102–Q128 are disordered. Basic and acidic residues predominate over residues K111 to Q128.

It belongs to the caulimoviridae viroplasmin family.

The protein resides in the host cytoplasm. In terms of biological role, enhances the translation of downstream ORFs on polycistronic mRNAs derived from carnation etched ring virus. In Dianthus caryophyllus (Carnation), this protein is Transactivator/viroplasmin protein.